The chain runs to 800 residues: DNA topoisomerase 4 subunit A (800 aa).

Residues 31 to 495 enclose the Topo IIA-type catalytic domain; it reads LPDVRDGLKP…EIEEIKIDKE (465 aa). Y119 acts as the O-(5'-phospho-DNA)-tyrosine intermediate in catalysis.

Belongs to the type II topoisomerase GyrA/ParC subunit family. ParC type 2 subfamily. As to quaternary structure, heterotetramer composed of ParC and ParE.

The protein resides in the cell membrane. The catalysed reaction is ATP-dependent breakage, passage and rejoining of double-stranded DNA.. Functionally, topoisomerase IV is essential for chromosome segregation. It relaxes supercoiled DNA. Performs the decatenation events required during the replication of a circular DNA molecule. In Staphylococcus aureus (strain NCTC 8325 / PS 47), this protein is DNA topoisomerase 4 subunit A.